Consider the following 1577-residue polypeptide: Dynamin-binding protein (1577 aa).

Met1 is modified (N-acetylmethionine). SH3 domains are found at residues 2–61 (EAGS…IVTI), 66–126 (EGER…ELCL), 145–204 (YSMG…LLGP), and 243–302 (EPGT…LCPD). Disordered stretches follow at residues 211–244 (SVSS…EEEP) and 335–395 (EEQR…WEMP). Residues 230–244 (VGEEEIGPDEDEEEP) show a composition bias toward acidic residues. Positions 335-344 (EEQRHETSDH) are enriched in basic and acidic residues. Ser496 bears the Phosphoserine mark. Disordered regions lie at residues 591–624 (GSSK…TSPH) and 639–659 (VRPS…NAVS). Pro residues predominate over residues 639-649 (VRPSRPAPLPP). Ser684 is subject to Phosphoserine. Residues 693–757 (LVLVRIEEME…ELQQLREMTL (65 aa)) adopt a coiled-coil conformation. Residues 784–967 (KRAKVIEELL…KEINVNINEY (184 aa)) enclose the DH domain. The 210-residue stretch at 1008 to 1217 (LKHLTGFAPQ…LKVAGREGNL (210 aa)) folds into the BAR domain. Residues 1136–1173 (ERAEKLKDKKTLEELQSARNNYEALNAQLLDELPKFHQ) are a coiled coil. An SH3 5 domain is found at 1285–1348 (PPEKLFQAER…YSSFLKPYNP (64 aa)). The disordered stretch occupies residues 1348–1487 (PRRSHSDASV…SVPGRNGQSQ (140 aa)). Residues 1376-1405 (RQNSGSTLTFNPSSMAVSFTSGSCQKQPQD) are compositionally biased toward polar residues. Residues 1419 to 1442 (SASLNPSNSESSPSRCPSDPDSTS) show a composition bias toward low complexity. The 64-residue stretch at 1513 to 1576 (EGNQVYFAVY…PSNYIRKTEY (64 aa)) folds into the SH3 6 domain.

Binds DNM1 via its N-terminal SH3 domains. The C-terminal SH3 domain binds a complex containing actin, tubulin, Hsp70 and actin-regulatory proteins, such as ENAH, EVL, WIRE, CR16, WAVE1 and NAP1L1. Interacts with FASLG. Interacts (via SH3 domain 6) with WASL. Interacts (via SH3 domain 6) interacts with ENAH. Interacts (via C-terminal domain) with TJP1; required for the apical cell-cell junction localization of DNMBP. As to quaternary structure, (Microbial infection) Interacts (via SH3 domain 6) with L.monocytogenes InlC. As to expression, detected in heart, brain, lung, liver, skeletal muscle, kidney and pancreas.

The protein resides in the cytoplasm. The protein localises to the golgi apparatus. It is found in the golgi stack. Its subcellular location is the cytoskeleton. It localises to the synapse. The protein resides in the cell junction. Functionally, plays a critical role as a guanine nucleotide exchange factor (GEF) for CDC42 in several intracellular processes associated with the actin and microtubule cytoskeleton. Regulates the structure of apical junctions through F-actin organization in epithelial cells. Participates in the normal lumenogenesis of epithelial cell cysts by regulating spindle orientation. Plays a role in ciliogenesis. May play a role in membrane trafficking between the cell surface and the Golgi. In Homo sapiens (Human), this protein is Dynamin-binding protein.